We begin with the raw amino-acid sequence, 324 residues long: Methionyl-tRNA formyltransferase (324 aa).

Residue 112–115 (SILP) participates in (6S)-5,6,7,8-tetrahydrofolate binding.

It belongs to the Fmt family.

The catalysed reaction is L-methionyl-tRNA(fMet) + (6R)-10-formyltetrahydrofolate = N-formyl-L-methionyl-tRNA(fMet) + (6S)-5,6,7,8-tetrahydrofolate + H(+). Functionally, attaches a formyl group to the free amino group of methionyl-tRNA(fMet). The formyl group appears to play a dual role in the initiator identity of N-formylmethionyl-tRNA by promoting its recognition by IF2 and preventing the misappropriation of this tRNA by the elongation apparatus. The chain is Methionyl-tRNA formyltransferase from Shewanella loihica (strain ATCC BAA-1088 / PV-4).